We begin with the raw amino-acid sequence, 471 residues long: Alpha-galactosidase (471 aa).

An N-terminal signal peptide occupies residues 1-18 (MFLLYLFTSFAAVSGVLG). Cysteines 42 and 74 form a disulfide. Positions 72 and 73 each coordinate substrate. N-linked (GlcNAc...) asparagine glycosylation is present at N82. A disulfide bridge connects residues C121 and C151. Substrate is bound at residue K147. The Nucleophile role is filled by D149. Residue N175 is glycosylated (N-linked (GlcNAc...) asparagine). R205 lines the substrate pocket. D209 functions as the Proton donor in the catalytic mechanism. 2 disulfide bridges follow: C221-C237 and C223-C230. A substrate-binding site is contributed by Q251. N270, N403, N412, N417, N422, N435, and N454 each carry an N-linked (GlcNAc...) asparagine glycan.

The protein belongs to the glycosyl hydrolase 27 family. Homotetramer.

The protein localises to the secreted. It carries out the reaction Hydrolysis of terminal, non-reducing alpha-D-galactose residues in alpha-D-galactosides, including galactose oligosaccharides, galactomannans and galactolipids.. This is Alpha-galactosidase (MEL) from Saccharomyces pastorianus (strain ATCC 76529 / Carlsberg bottom yeast no.1 / CBS 1513 / CLIB 176 / NBRC 1167 / NCYC 396 / NRRL Y-12693) (Saaz-type lager yeast).